The chain runs to 168 residues: NADH-quinone oxidoreductase subunit B (168 aa).

The [4Fe-4S] cluster site is built by Cys-49, Cys-50, Cys-114, and Cys-144.

Belongs to the complex I 20 kDa subunit family. In terms of assembly, NDH-1 is composed of 14 different subunits. Subunits NuoB, C, D, E, F, and G constitute the peripheral sector of the complex. Requires [4Fe-4S] cluster as cofactor.

It localises to the cell membrane. The catalysed reaction is a quinone + NADH + 5 H(+)(in) = a quinol + NAD(+) + 4 H(+)(out). Functionally, NDH-1 shuttles electrons from NADH, via FMN and iron-sulfur (Fe-S) centers, to quinones in the respiratory chain. Couples the redox reaction to proton translocation (for every two electrons transferred, four hydrogen ions are translocated across the cytoplasmic membrane), and thus conserves the redox energy in a proton gradient. The sequence is that of NADH-quinone oxidoreductase subunit B from Wolbachia sp. subsp. Brugia malayi (strain TRS).